The following is a 1286-amino-acid chain: DNA-directed RNA polymerase 147 kDa polypeptide (1286 aa).

Belongs to the poxviridae DNA-directed RNA polymerase 147 kDa subunit family. In terms of assembly, the DNA-dependent RNA polymerase used for intermediate and late genes expression consists of eight subunits Rpo30/OPG66, Rpo7/OPG90, Rpo22/OPG103, Rpo147/OPG105, Rpo18/OPG119, Rpo19/OPG131, Rpo132/OPG151 and Rpo35/OPG156. The same holoenzyme, with the addition of the transcription-specificity factor OPG109, is used for early gene expression.

It is found in the virion. The enzyme catalyses RNA(n) + a ribonucleoside 5'-triphosphate = RNA(n+1) + diphosphate. Its function is as follows. Part of the DNA-dependent RNA polymerase which catalyzes the transcription of viral DNA into RNA using the four ribonucleoside triphosphates as substrates. Responsible for the transcription of early, intermediate and late genes. DNA-dependent RNA polymerase associates with the early transcription factor (ETF), itself composed of OPG118 and OPG133, thereby allowing the early genes transcription. Late transcription, and probably also intermediate transcription, require newly synthesized RNA polymerase. The polypeptide is DNA-directed RNA polymerase 147 kDa polypeptide (OPG105) (Vaccinia virus (strain Ankara) (VACV)).